A 304-amino-acid polypeptide reads, in one-letter code: Acetylxylan esterase A (304 aa).

The first 24 residues, 1-24, serve as a signal peptide directing secretion; the sequence is MLLSTHLLFVITTLVTSLLHPIDG. S148 (charge relay system) is an active-site residue. A glycan (N-linked (GlcNAc...) asparagine) is linked at N190.

This sequence belongs to the carbohydrate esterase 1 (CE1) family. AxeA subfamily. In terms of assembly, monomer.

The protein resides in the secreted. It catalyses the reaction Deacetylation of xylans and xylo-oligosaccharides.. It functions in the pathway glycan degradation; xylan degradation. Inactivated by di-isopropylfluorophosphate and phenylmethylsulfonylfluorid (PMSF), a specific inhibitor of serine esterases. In terms of biological role, acetylxylan esterase involved in the hydrolysis of xylan, a major structural heterogeneous polysaccharide found in plant biomass representing the second most abundant polysaccharide in the biosphere, after cellulose. Degrades acetylated xylans by cleaving acetyl side groups from the hetero-xylan backbone. The polypeptide is Acetylxylan esterase A (axeA) (Aspergillus awamori (Black koji mold)).